A 644-amino-acid chain; its full sequence is Exoribonuclease 2 (644 aa).

Positions 189–516 constitute an RNB domain; the sequence is REDLTALDFV…NHRLLKAVIK (328 aa). In terms of domain architecture, S1 motif spans 561 to 643; it reads GTRFAAEIVD…ETRGIIARPV (83 aa).

It belongs to the RNR ribonuclease family. RNase II subfamily.

The protein localises to the cytoplasm. It catalyses the reaction Exonucleolytic cleavage in the 3'- to 5'-direction to yield nucleoside 5'-phosphates.. Involved in mRNA degradation. Hydrolyzes single-stranded polyribonucleotides processively in the 3' to 5' direction. In Shigella sonnei (strain Ss046), this protein is Exoribonuclease 2.